Reading from the N-terminus, the 246-residue chain is 1-(5-phosphoribosyl)-5-[(5-phosphoribosylamino)methylideneamino] imidazole-4-carboxamide isomerase (246 aa).

The active-site Proton acceptor is aspartate 7. Residue aspartate 130 is the Proton donor of the active site.

This sequence belongs to the HisA/HisF family.

The protein localises to the cytoplasm. The catalysed reaction is 1-(5-phospho-beta-D-ribosyl)-5-[(5-phospho-beta-D-ribosylamino)methylideneamino]imidazole-4-carboxamide = 5-[(5-phospho-1-deoxy-D-ribulos-1-ylimino)methylamino]-1-(5-phospho-beta-D-ribosyl)imidazole-4-carboxamide. Its pathway is amino-acid biosynthesis; L-histidine biosynthesis; L-histidine from 5-phospho-alpha-D-ribose 1-diphosphate: step 4/9. In Blochmanniella pennsylvanica (strain BPEN), this protein is 1-(5-phosphoribosyl)-5-[(5-phosphoribosylamino)methylideneamino] imidazole-4-carboxamide isomerase.